Reading from the N-terminus, the 428-residue chain is C4-dicarboxylate transport protein (428 aa).

Transmembrane regions (helical) follow at residues serine 4 to glycine 24, leucine 44 to methionine 64, valine 76 to valine 96, isoleucine 142 to phenylalanine 162, valine 184 to methionine 204, leucine 222 to alanine 242, valine 289 to leucine 309, isoleucine 326 to valine 346, and isoleucine 352 to isoleucine 372.

Belongs to the dicarboxylate/amino acid:cation symporter (DAACS) (TC 2.A.23) family.

It is found in the cell inner membrane. Its function is as follows. Responsible for the transport of dicarboxylates such as succinate, fumarate, and malate from the periplasm across the membrane. The polypeptide is C4-dicarboxylate transport protein (Salmonella arizonae (strain ATCC BAA-731 / CDC346-86 / RSK2980)).